Consider the following 1985-residue polypeptide: Non-reducing polyketide synthase ntnG (1985 aa).

The tract at residues Leu-7 to His-243 is N-terminal acylcarrier protein transacylase (SAT) domain. Residues Ser-364–Glu-792 form the Ketosynthase family 3 (KS3) domain. Catalysis depends on for beta-ketoacyl synthase activity residues Cys-536, His-671, and His-711. The segment at Val-889 to Cys-1148 is malonyl-CoA:ACP transacylase (MAT) domain. The active-site For acyl/malonyl transferase activity is Ser-980. The tract at residues His-1261 to Asp-1392 is N-terminal hotdog fold. Residues His-1261–His-1567 enclose the PKS/mFAS DH domain. Positions Lys-1265–Leu-1566 are product template (PT) domain. The Proton acceptor; for dehydratase activity role is filled by His-1293. The segment at Ala-1414–His-1567 is C-terminal hotdog fold. Residue Asp-1479 is the Proton donor; for dehydratase activity of the active site. Residues Asn-1578–Pro-1605 are compositionally biased toward polar residues. The disordered stretch occupies residues Asn-1578–Ser-1622. Positions Ser-1622–Glu-1699 constitute a Carrier domain. O-(pantetheine 4'-phosphoryl)serine is present on Ser-1659. A thioesterase (TE) domain region spans residues Thr-1719–Lys-1913.

Its pathway is secondary metabolite biosynthesis; terpenoid biosynthesis. In terms of biological role, non-reducing polyketide synthase; part of the gene cluster that mediates the biosynthesis of the meroterpenoids nectripenoids A and B, as well as cochliquninone D and isocochliquninone E. The pathway probably begins with the HR-PKS ntnH that catalyzes two chain-extension steps to form a reduced triketide, which then primes the SAT domain in the NR-PKS ntnG to initiate three more cycles of extension to give a linear hexaketide corresponding to the polyketide part of nectripenoids. The FAD-dependent monooxygenase ntnJ then performs an oxidative decarboxylation at C11 of the ntnH/ntnG product, via an electrophilic aromatic hydroxylation with concomitant ipso-decarboxylation. The membrane-bound polyprenyl transferase ntnF then introduces a farnesyl group before the FAD-dependent monooxygenase ntnK functions as the first epoxidase on terminal C12'-C13' olefin, followed by a second epoxidation on C7'-C8' catalyzed by ntnA. The terpene cyclase/mutase ntnI then initiates the sequential tricyclic ring formation through protonation of the terminal epoxide and catalyzes the regioselective and stereoselective 6/6/6-tricyclic ring formation. The cytochrome P450 monooxygenase ntnM may then hydroxylate C1'. The protein is Non-reducing polyketide synthase ntnG of Nectria sp.